The following is a 372-amino-acid chain: DNA replication and repair protein RecF (372 aa).

30–37 (GENAQGKT) lines the ATP pocket.

The protein belongs to the RecF family.

It is found in the cytoplasm. In terms of biological role, the RecF protein is involved in DNA metabolism; it is required for DNA replication and normal SOS inducibility. RecF binds preferentially to single-stranded, linear DNA. It also seems to bind ATP. The polypeptide is DNA replication and repair protein RecF (Geobacillus thermodenitrificans (strain NG80-2)).